The following is a 324-amino-acid chain: MKPSVILYKALPDDLLQRLQEHFTVHQVANLSPQTVEQNAAIFAEAEGLLGSNENVDAALLEKMPKLRATSTISVGYDNFDVDALTARKILLMHTPTVLTETVADTLMALVLSTARRVVEVAERVKAGEWTASIGPDWYGTDVHHKTLGIVGMGRIGMALAQRAHFGFNMPILYNARRHHKEAEERFNARYCDLDTLLQESDFVCLILPLTDETHHLFGAEQFAKMKSSAIFINAGRGPVVDENALIAALQKGEIHAAGLDVFEQEPLSVDSPLLSMANVVAVPHIGSATHETRYGMAACAVDNLIDALQGKVEKNCVNPHVAD.

Active-site residues include Arg237 and Glu266. His285 functions as the Proton donor in the catalytic mechanism.

The protein belongs to the D-isomer specific 2-hydroxyacid dehydrogenase family. GhrB subfamily. Homodimer.

The protein localises to the cytoplasm. It carries out the reaction glycolate + NADP(+) = glyoxylate + NADPH + H(+). It catalyses the reaction (R)-glycerate + NAD(+) = 3-hydroxypyruvate + NADH + H(+). The enzyme catalyses (R)-glycerate + NADP(+) = 3-hydroxypyruvate + NADPH + H(+). Catalyzes the NADPH-dependent reduction of glyoxylate and hydroxypyruvate into glycolate and glycerate, respectively. This Shigella boydii serotype 18 (strain CDC 3083-94 / BS512) protein is Glyoxylate/hydroxypyruvate reductase B.